A 466-amino-acid polypeptide reads, in one-letter code: Membrane-bound lytic murein transglycosylase F (466 aa).

The first 24 residues, 1-24 (MKRFKLNYFIIGLIAILLTWSLWT), serve as a signal peptide directing secretion. The tract at residues 25 to 268 (TVPWRNAHQD…RLEEKYLGHV (244 aa)) is non-LT domain. The LT domain stretch occupies residues 269–466 (GGFDYVDTKT…KEKKAAQLAD (198 aa)). E313 is a catalytic residue.

In the N-terminal section; belongs to the bacterial solute-binding protein 3 family. It in the C-terminal section; belongs to the transglycosylase Slt family.

The protein resides in the cell outer membrane. The catalysed reaction is Exolytic cleavage of the (1-&gt;4)-beta-glycosidic linkage between N-acetylmuramic acid (MurNAc) and N-acetylglucosamine (GlcNAc) residues in peptidoglycan, from either the reducing or the non-reducing ends of the peptidoglycan chains, with concomitant formation of a 1,6-anhydrobond in the MurNAc residue.. Murein-degrading enzyme that degrades murein glycan strands and insoluble, high-molecular weight murein sacculi, with the concomitant formation of a 1,6-anhydromuramoyl product. Lytic transglycosylases (LTs) play an integral role in the metabolism of the peptidoglycan (PG) sacculus. Their lytic action creates space within the PG sacculus to allow for its expansion as well as for the insertion of various structures such as secretion systems and flagella. The protein is Membrane-bound lytic murein transglycosylase F of Sodalis glossinidius (strain morsitans).